The sequence spans 322 residues: GTP 3',8-cyclase (322 aa).

The Radical SAM core domain maps to 5–217; it reads SYGRVVDYLR…DIISKKYNIK (213 aa). Arg-14 is a binding site for GTP. The [4Fe-4S] cluster site is built by Cys-21 and Cys-25. Position 27 (Tyr-27) interacts with S-adenosyl-L-methionine. Residue Cys-28 coordinates [4Fe-4S] cluster. Arg-64 provides a ligand contact to GTP. Gly-68 is an S-adenosyl-L-methionine binding site. Thr-95 lines the GTP pocket. Ser-119 lines the S-adenosyl-L-methionine pocket. Residue Lys-155 participates in GTP binding. Met-189 contributes to the S-adenosyl-L-methionine binding site. [4Fe-4S] cluster is bound by residues Cys-249 and Cys-252. 254–256 contributes to the GTP binding site; that stretch reads RLR. A [4Fe-4S] cluster-binding site is contributed by Cys-266.

The protein belongs to the radical SAM superfamily. MoaA family. In terms of assembly, monomer and homodimer. [4Fe-4S] cluster serves as cofactor.

The enzyme catalyses GTP + AH2 + S-adenosyl-L-methionine = (8S)-3',8-cyclo-7,8-dihydroguanosine 5'-triphosphate + 5'-deoxyadenosine + L-methionine + A + H(+). The protein operates within cofactor biosynthesis; molybdopterin biosynthesis. In terms of biological role, catalyzes the cyclization of GTP to (8S)-3',8-cyclo-7,8-dihydroguanosine 5'-triphosphate. This chain is GTP 3',8-cyclase, found in Campylobacter fetus subsp. fetus (strain 82-40).